We begin with the raw amino-acid sequence, 679 residues long: Protein hook (679 aa).

The region spanning 5-123 (NGMYYSLLEW…RLLQLVLGCA (119 aa)) is the Calponin-homology (CH) domain. Residues 140–627 (EEELQANIMR…SKTKMSTMEE (488 aa)) adopt a coiled-coil conformation.

It belongs to the hook family. Homodimer. Interacts with microtubules via its N-terminus.

It localises to the cytoplasm. The protein localises to the cytoskeleton. It is found in the endosome. The protein resides in the synapse. Involved in endocytic trafficking by stabilizing organelles of the endocytic pathway. Probably acts as a cytoskeletal linker protein required to tether endosome vesicles to the cytoskeleton. Involved in modulation of endocytosis at stages required for down-regulation of membrane proteins that control synapse size. Not involved in synaptic vesicle recycling. Required in R7 cells for boss endocytosis into multivesicular bodies (MVBs). Has a role in regulating adult longevity. The chain is Protein hook from Drosophila mojavensis (Fruit fly).